The sequence spans 500 residues: Na(+)/H(+) antiporter NhaB (500 aa).

11 helical membrane passes run 23–43 (VVIC…GPVA), 53–73 (IFTL…LLLI), 96–116 (VILL…LLLF), 129–149 (AILA…LDAL), 150–170 (TVTA…HRVA), 205–225 (LLMH…VGEP), 238–258 (FVDF…AGLV), 311–331 (ILII…LMVI), 350–370 (FQDA…VAVI), 450–470 (ATPN…APLI), and 477–497 (MVWM…WAVT).

Belongs to the NhaB Na(+)/H(+) (TC 2.A.34) antiporter family.

The protein resides in the cell inner membrane. It catalyses the reaction 2 Na(+)(in) + 3 H(+)(out) = 2 Na(+)(out) + 3 H(+)(in). In terms of biological role, na(+)/H(+) antiporter that extrudes sodium in exchange for external protons. In Pseudomonas putida (strain ATCC 47054 / DSM 6125 / CFBP 8728 / NCIMB 11950 / KT2440), this protein is Na(+)/H(+) antiporter NhaB.